Reading from the N-terminus, the 299-residue chain is 4-hydroxybenzoate octaprenyltransferase (299 aa).

8 consecutive transmembrane segments (helical) span residues 33 to 53 (VGFL…AGGV), 56 to 76 (WWTL…GCVI), 107 to 127 (LLMF…MNQL), 151 to 171 (LPQV…FAAI), 180 to 200 (WLLY…CAMV), 214 to 234 (AILF…LMLF), 247 to 267 (HTYW…FIIA), and 278 to 298 (AFMH…LATT).

Belongs to the UbiA prenyltransferase family. Mg(2+) serves as cofactor.

Its subcellular location is the cell inner membrane. It carries out the reaction all-trans-octaprenyl diphosphate + 4-hydroxybenzoate = 4-hydroxy-3-(all-trans-octaprenyl)benzoate + diphosphate. Its pathway is cofactor biosynthesis; ubiquinone biosynthesis. In terms of biological role, catalyzes the prenylation of para-hydroxybenzoate (PHB) with an all-trans polyprenyl group. Mediates the second step in the final reaction sequence of ubiquinone-8 (UQ-8) biosynthesis, which is the condensation of the polyisoprenoid side chain with PHB, generating the first membrane-bound Q intermediate 3-octaprenyl-4-hydroxybenzoate. The polypeptide is 4-hydroxybenzoate octaprenyltransferase (Xylella fastidiosa (strain 9a5c)).